The chain runs to 432 residues: Acyl-coenzyme A thioesterase 3 (432 aa).

Active-site charge relay system residues include serine 243, aspartate 337, and histidine 371. The short motif at alanine 430–leucine 432 is the Microbody targeting signal element.

Belongs to the C/M/P thioester hydrolase family. In terms of tissue distribution, widely expressed. Highly expressed in the kidney, expressed at low level in the liver. Isoform 2 is expressed in the kidney, but not in the liver. Isoform 1 is liver-specific. Highly expressed in kidney (at protein level).

It is found in the peroxisome. It catalyses the reaction hexadecanoyl-CoA + H2O = hexadecanoate + CoA + H(+). The enzyme catalyses decanoyl-CoA + H2O = decanoate + CoA + H(+). It carries out the reaction dodecanoyl-CoA + H2O = dodecanoate + CoA + H(+). The catalysed reaction is tetradecanoyl-CoA + H2O = tetradecanoate + CoA + H(+). It catalyses the reaction octadecanoyl-CoA + H2O = octadecanoate + CoA + H(+). The enzyme catalyses eicosanoyl-CoA + H2O = eicosanoate + CoA + H(+). It carries out the reaction (9Z)-octadecenoyl-CoA + H2O = (9Z)-octadecenoate + CoA + H(+). The catalysed reaction is (9Z,12Z)-octadecadienoyl-CoA + H2O = (9Z,12Z)-octadecadienoate + CoA + H(+). It catalyses the reaction (5Z,8Z,11Z,14Z)-eicosatetraenoyl-CoA + H2O = (5Z,8Z,11Z,14Z)-eicosatetraenoate + CoA + H(+). The enzyme catalyses tetracosanoyl-CoA + H2O = tetracosanoate + CoA + H(+). It carries out the reaction hexacosanoyl-CoA + H2O = hexacosanoate + CoA + H(+). The catalysed reaction is docosanoyl-CoA + H2O = docosanoate + CoA + H(+). It catalyses the reaction (9Z)-hexadecenoyl-CoA + H2O = (9Z)-hexadecenoate + CoA + H(+). Its pathway is lipid metabolism; fatty acid metabolism. Functionally, catalyzes the hydrolysis of acyl-CoAs into free fatty acids and coenzyme A (CoASH), regulating their respective intracellular levels. Mainly active on long-chain acyl-CoAs. May have a function in termination of beta-oxidation of fatty acids. In Mus musculus (Mouse), this protein is Acyl-coenzyme A thioesterase 3 (Acot3).